A 360-amino-acid chain; its full sequence is Dual-specificity RNA methyltransferase RlmN (360 aa).

Glu89 (proton acceptor) is an active-site residue. The 236-residue stretch at 95–330 folds into the Radical SAM core domain; sequence DSGRGTLCVS…TRVTRGQDID (236 aa). A disulfide bridge connects residues Cys102 and Cys333. Cys109, Cys113, and Cys116 together coordinate [4Fe-4S] cluster. Residues 159–160, Ser191, 213–215, and Asn290 contribute to the S-adenosyl-L-methionine site; these read GE and SLH. Cys333 acts as the S-methylcysteine intermediate in catalysis.

It belongs to the radical SAM superfamily. RlmN family. [4Fe-4S] cluster is required as a cofactor.

The protein localises to the cytoplasm. It carries out the reaction adenosine(2503) in 23S rRNA + 2 reduced [2Fe-2S]-[ferredoxin] + 2 S-adenosyl-L-methionine = 2-methyladenosine(2503) in 23S rRNA + 5'-deoxyadenosine + L-methionine + 2 oxidized [2Fe-2S]-[ferredoxin] + S-adenosyl-L-homocysteine. It catalyses the reaction adenosine(37) in tRNA + 2 reduced [2Fe-2S]-[ferredoxin] + 2 S-adenosyl-L-methionine = 2-methyladenosine(37) in tRNA + 5'-deoxyadenosine + L-methionine + 2 oxidized [2Fe-2S]-[ferredoxin] + S-adenosyl-L-homocysteine. Its function is as follows. Specifically methylates position 2 of adenine 2503 in 23S rRNA and position 2 of adenine 37 in tRNAs. m2A2503 modification seems to play a crucial role in the proofreading step occurring at the peptidyl transferase center and thus would serve to optimize ribosomal fidelity. The polypeptide is Dual-specificity RNA methyltransferase RlmN (Alkalilimnicola ehrlichii (strain ATCC BAA-1101 / DSM 17681 / MLHE-1)).